We begin with the raw amino-acid sequence, 206 residues long: Small ribosomal subunit protein uS4 (206 aa).

In terms of domain architecture, S4 RNA-binding spans 98–164 (MRLDNVVYRL…EKFKTFIENP (67 aa)).

The protein belongs to the universal ribosomal protein uS4 family. As to quaternary structure, part of the 30S ribosomal subunit. Contacts protein S5. The interaction surface between S4 and S5 is involved in control of translational fidelity.

Its function is as follows. One of the primary rRNA binding proteins, it binds directly to 16S rRNA where it nucleates assembly of the body of the 30S subunit. Functionally, with S5 and S12 plays an important role in translational accuracy. This is Small ribosomal subunit protein uS4 from Clostridium tetani (strain Massachusetts / E88).